We begin with the raw amino-acid sequence, 119 residues long: T cell receptor alpha variable 29/delta variable 5 (119 aa).

A signal peptide spans 1–21; sequence MAMLLGASVLILWLQPDWVNS. The region spanning 22–119 is the Ig-like domain; the sequence is QQKNDDQQVK…DSAVYFCAAS (98 aa). A disulfide bond links cysteine 49 and cysteine 116. An N-linked (GlcNAc...) asparagine glycan is attached at asparagine 93.

In terms of assembly, alpha-beta TR is a heterodimer composed of an alpha and beta chain; disulfide-linked. The alpha-beta TR is associated with the transmembrane signaling CD3 coreceptor proteins to form the TR-CD3 (TcR or TCR). The assembly of alpha-beta TR heterodimers with CD3 occurs in the endoplasmic reticulum where a single alpha-beta TR heterodimer associates with one CD3D-CD3E heterodimer, one CD3G-CD3E heterodimer and one CD247 homodimer forming a stable octameric structure. CD3D-CD3E and CD3G-CD3E heterodimers preferentially associate with TR alpha and TR beta chains, respectively. The association of the CD247 homodimer is the last step of TcR assembly in the endoplasmic reticulum and is required for transport to the cell surface.

Its subcellular location is the cell membrane. Functionally, v region of the variable domain of T cell receptor (TR) alpha chain that participates in the antigen recognition. Alpha-beta T cell receptors are antigen specific receptors which are essential to the immune response and are present on the cell surface of T lymphocytes. Recognize peptide-major histocompatibility (MH) (pMH) complexes that are displayed by antigen presenting cells (APC), a prerequisite for efficient T cell adaptive immunity against pathogens. Binding of alpha-beta TR to pMH complex initiates TR-CD3 clustering on the cell surface and intracellular activation of LCK that phosphorylates the ITAM motifs of CD3G, CD3D, CD3E and CD247 enabling the recruitment of ZAP70. In turn ZAP70 phosphorylates LAT, which recruits numerous signaling molecules to form the LAT signalosome. The LAT signalosome propagates signal branching to three major signaling pathways, the calcium, the mitogen-activated protein kinase (MAPK) kinase and the nuclear factor NF-kappa-B (NF-kB) pathways, leading to the mobilization of transcription factors that are critical for gene expression and essential for T cell growth and differentiation. The T cell repertoire is generated in the thymus, by V-(D)-J rearrangement. This repertoire is then shaped by intrathymic selection events to generate a peripheral T cell pool of self-MH restricted, non-autoaggressive T cells. Post-thymic interaction of alpha-beta TR with the pMH complexes shapes TR structural and functional avidity. This Homo sapiens (Human) protein is T cell receptor alpha variable 29/delta variable 5.